A 468-amino-acid polypeptide reads, in one-letter code: Probable citrate synthase, mitochondrial (468 aa).

Catalysis depends on residues histidine 303, histidine 349, and aspartate 404.

This sequence belongs to the citrate synthase family. Homodimer.

It localises to the mitochondrion matrix. It carries out the reaction oxaloacetate + acetyl-CoA + H2O = citrate + CoA + H(+). It participates in carbohydrate metabolism; tricarboxylic acid cycle; isocitrate from oxaloacetate: step 1/2. The polypeptide is Probable citrate synthase, mitochondrial (cts-1) (Caenorhabditis briggsae).